A 74-amino-acid chain; its full sequence is Conotoxin TsMLCL-04 (74 aa).

The first 19 residues, 1-19 (MLCLPVFIILLLLASPAAP), serve as a signal peptide directing secretion. The propeptide occupies 20–60 (NPLETRIQRDLIRAALEDADMKTNERFLEGVISTIKDFAGK).

The protein belongs to the conotoxin T superfamily. In terms of processing, contains 2 disulfide bonds that can be either 'C1-C3, C2-C4' or 'C1-C4, C2-C3', since these disulfide connectivities have been observed for conotoxins with cysteine framework V (for examples, see AC P0DQQ7 and AC P81755). In terms of tissue distribution, expressed by the venom duct.

It localises to the secreted. The sequence is that of Conotoxin TsMLCL-04 from Conus tessulatus (Tessellate cone).